A 242-amino-acid polypeptide reads, in one-letter code: Phosphoribosylaminoimidazole-succinocarboxamide synthase (242 aa).

Belongs to the SAICAR synthetase family.

The catalysed reaction is 5-amino-1-(5-phospho-D-ribosyl)imidazole-4-carboxylate + L-aspartate + ATP = (2S)-2-[5-amino-1-(5-phospho-beta-D-ribosyl)imidazole-4-carboxamido]succinate + ADP + phosphate + 2 H(+). Its pathway is purine metabolism; IMP biosynthesis via de novo pathway; 5-amino-1-(5-phospho-D-ribosyl)imidazole-4-carboxamide from 5-amino-1-(5-phospho-D-ribosyl)imidazole-4-carboxylate: step 1/2. This chain is Phosphoribosylaminoimidazole-succinocarboxamide synthase, found in Trichodesmium erythraeum (strain IMS101).